A 280-amino-acid chain; its full sequence is Thiamine-phosphate synthase (280 aa).

The disordered stretch occupies residues 1 to 64; the sequence is MGWSGSPLTL…ATGRGGLRMT (64 aa). A compositionally biased stretch (basic and acidic residues) spans 42–55; sequence GRGELRSRERRGEA. Residues 104 to 108 and asparagine 141 each bind 4-amino-2-methyl-5-(diphosphooxymethyl)pyrimidine; that span reads QLRCK. Mg(2+) contacts are provided by aspartate 142 and aspartate 161. Position 179 (serine 179) interacts with 4-amino-2-methyl-5-(diphosphooxymethyl)pyrimidine. 205–207 is a binding site for 2-[(2R,5Z)-2-carboxy-4-methylthiazol-5(2H)-ylidene]ethyl phosphate; it reads TPT. Lysine 208 contacts 4-amino-2-methyl-5-(diphosphooxymethyl)pyrimidine. Glycine 236 provides a ligand contact to 2-[(2R,5Z)-2-carboxy-4-methylthiazol-5(2H)-ylidene]ethyl phosphate.

This sequence belongs to the thiamine-phosphate synthase family. Mg(2+) is required as a cofactor.

It carries out the reaction 2-[(2R,5Z)-2-carboxy-4-methylthiazol-5(2H)-ylidene]ethyl phosphate + 4-amino-2-methyl-5-(diphosphooxymethyl)pyrimidine + 2 H(+) = thiamine phosphate + CO2 + diphosphate. The catalysed reaction is 2-(2-carboxy-4-methylthiazol-5-yl)ethyl phosphate + 4-amino-2-methyl-5-(diphosphooxymethyl)pyrimidine + 2 H(+) = thiamine phosphate + CO2 + diphosphate. The enzyme catalyses 4-methyl-5-(2-phosphooxyethyl)-thiazole + 4-amino-2-methyl-5-(diphosphooxymethyl)pyrimidine + H(+) = thiamine phosphate + diphosphate. The protein operates within cofactor biosynthesis; thiamine diphosphate biosynthesis; thiamine phosphate from 4-amino-2-methyl-5-diphosphomethylpyrimidine and 4-methyl-5-(2-phosphoethyl)-thiazole: step 1/1. Functionally, condenses 4-methyl-5-(beta-hydroxyethyl)thiazole monophosphate (THZ-P) and 2-methyl-4-amino-5-hydroxymethyl pyrimidine pyrophosphate (HMP-PP) to form thiamine monophosphate (TMP). This is Thiamine-phosphate synthase from Deinococcus radiodurans (strain ATCC 13939 / DSM 20539 / JCM 16871 / CCUG 27074 / LMG 4051 / NBRC 15346 / NCIMB 9279 / VKM B-1422 / R1).